The following is a 375-amino-acid chain: 4,4'-diaponeurosporenoate glycosyltransferase (375 aa).

The next 4 membrane-spanning stretches (helical) occupy residues 7-23 (LLHA…YLMY), 112-132 (ACYL…DADV), 280-300 (IMML…GLAL), and 333-353 (FSIL…LVYI).

The protein belongs to the glycosyltransferase 2 family. CrtQ subfamily.

The protein resides in the cell membrane. It participates in carotenoid biosynthesis; staphyloxanthin biosynthesis; staphyloxanthin from farnesyl diphosphate: step 4/5. Its function is as follows. Catalyzes the glycosylation of 4,4'-diaponeurosporenoate, i.e. the esterification of glucose at the C1'' position with the carboxyl group of 4,4'-diaponeurosporenic acid, to form glycosyl-4,4'-diaponeurosporenoate. This is a step in the biosynthesis of staphyloxanthin, an orange pigment present in most staphylococci strains. The sequence is that of 4,4'-diaponeurosporenoate glycosyltransferase (crtQ) from Staphylococcus haemolyticus (strain JCSC1435).